Consider the following 304-residue polypeptide: L-threonate dehydrogenase (304 aa).

NAD(+) contacts are provided by residues 7 to 35 and threonine 102; that span reads YAVA…TYGV. Lysine 178 is a catalytic residue. Lysine 246 is a binding site for NAD(+).

It belongs to the HIBADH-related family. L-threonate dehydrogenase subfamily.

It carries out the reaction L-threonate + NAD(+) = 2-dehydro-L-erythronate + NADH + H(+). Functionally, catalyzes oxidation of L-threonate to 2-oxo-tetronate. Can use either NAD(+) or NADP(+) as cosubstrate, with a preference for NAD(+). The chain is L-threonate dehydrogenase from Pectobacterium atrosepticum (strain SCRI 1043 / ATCC BAA-672) (Erwinia carotovora subsp. atroseptica).